Here is a 241-residue protein sequence, read N- to C-terminus: Uridylate kinase (241 aa).

12 to 15 lines the ATP pocket; it reads KLSG. Residue G54 participates in UMP binding. 2 residues coordinate ATP: G55 and R59. UMP is bound by residues D74 and 135–142; that span reads VGAPYFTT. Residues T162, Y168, and D171 each contribute to the ATP site.

This sequence belongs to the UMP kinase family. As to quaternary structure, homohexamer.

Its subcellular location is the cytoplasm. The enzyme catalyses UMP + ATP = UDP + ADP. It participates in pyrimidine metabolism; CTP biosynthesis via de novo pathway; UDP from UMP (UMPK route): step 1/1. With respect to regulation, inhibited by UTP. Functionally, catalyzes the reversible phosphorylation of UMP to UDP. This is Uridylate kinase from Sphingopyxis alaskensis (strain DSM 13593 / LMG 18877 / RB2256) (Sphingomonas alaskensis).